Reading from the N-terminus, the 89-residue chain is Large ribosomal subunit protein bL27 (89 aa).

This sequence belongs to the bacterial ribosomal protein bL27 family.

In Bacteroides fragilis (strain ATCC 25285 / DSM 2151 / CCUG 4856 / JCM 11019 / LMG 10263 / NCTC 9343 / Onslow / VPI 2553 / EN-2), this protein is Large ribosomal subunit protein bL27.